The primary structure comprises 432 residues: Enolase (432 aa).

Gln-166 contributes to the (2R)-2-phosphoglycerate binding site. The active-site Proton donor is Glu-210. Positions 247, 288, and 315 each coordinate Mg(2+). (2R)-2-phosphoglycerate contacts are provided by Lys-340, Arg-369, Ser-370, and Lys-391. Lys-340 acts as the Proton acceptor in catalysis.

It belongs to the enolase family. The cofactor is Mg(2+).

Its subcellular location is the cytoplasm. The protein resides in the secreted. The protein localises to the cell surface. The catalysed reaction is (2R)-2-phosphoglycerate = phosphoenolpyruvate + H2O. It functions in the pathway carbohydrate degradation; glycolysis; pyruvate from D-glyceraldehyde 3-phosphate: step 4/5. In terms of biological role, catalyzes the reversible conversion of 2-phosphoglycerate (2-PG) into phosphoenolpyruvate (PEP). It is essential for the degradation of carbohydrates via glycolysis. This chain is Enolase, found in Aeropyrum pernix (strain ATCC 700893 / DSM 11879 / JCM 9820 / NBRC 100138 / K1).